We begin with the raw amino-acid sequence, 607 residues long: Cytosolic Fe-S cluster assembly factor nar1 (607 aa).

[4Fe-4S] cluster is bound at residue cysteine 20. The disordered stretch occupies residues 28 to 47 (PKNESSNSQNPYEVTTEDKV). The segment covering 29–40 (KNESSNSQNPYE) has biased composition (polar residues). 5 residues coordinate [4Fe-4S] cluster: cysteine 62, cysteine 65, cysteine 68, cysteine 214, and cysteine 269. Residues 439 to 461 (ARVPAASAGGNRRQPISRNSASA) form a disordered region. A compositionally biased stretch (polar residues) spans 452-461 (QPISRNSASA). 2 residues coordinate [4Fe-4S] cluster: cysteine 475 and cysteine 479. Residues 494–505 (ASTSTQSVTAVE) show a composition bias toward polar residues. A disordered region spans residues 494–513 (ASTSTQSVTAVENPSKPTPH).

The protein belongs to the NARF family.

Component of the cytosolic Fe/S protein assembly machinery. Required for maturation of extramitochondrial Fe/S proteins. May play a role in the transfer of pre-assembled Fe/S clusters to target apoproteins. This is Cytosolic Fe-S cluster assembly factor nar1 (nar1) from Aspergillus oryzae (strain ATCC 42149 / RIB 40) (Yellow koji mold).